The primary structure comprises 505 residues: Kinesin light chain 3 (505 aa).

Residues 1-20 (MSVQVAAPGGLGLGLERPSP) form a disordered region. Residues 88–150 (LLALSAHVGA…EEEKSHLEFL (63 aa)) adopt a coiled-coil conformation. The segment at 157–193 (DPPAESQQPESPPRRDSLASLFPSEEEERRGPEAVGA) is disordered. Residue Ser-173 is modified to Phosphoserine. TPR repeat units lie at residues 207 to 240 (LRTLHNLVIQYAGQGRYEVAVPLCRQALEDLERS), 249 to 282 (ATMLNILALVYRDQNKYKEATDLLHDALQIREQT), 291 to 324 (AATLNNLAVLYGKRGRYREAEPLCQRALEIREKV), 333 to 366 (AKQLNNLALLCQNQGKFEEVERHYARALSIYEAL), and 375 to 408 (AKTKNNLASAYLKQNKYQQAEELYKEILHREALP). Residues 409–505 (APLGAPNTGT…STSTQDLGPR (97 aa)) are disordered. A compositionally biased stretch (low complexity) spans 416 to 434 (TGTTSDTQQQTLSRSSSFS). Over residues 435–453 (KLRESIRRGSEKLVSRLRG) the composition is skewed to basic and acidic residues. Ser-467 carries the post-translational modification Phosphoserine. Over residues 489–505 (SEASRTLSTSTQDLGPR) the composition is skewed to polar residues. Residue Thr-499 is modified to Phosphothreonine.

This sequence belongs to the kinesin light chain family. Oligomer composed of two heavy chains and two light chains. Associates with microtubulin in an ATP-dependent manner. Interacts with KIF5C. Interacts with ODF1. Interacts with LRGUK. Interacts with VDAC2.

It is found in the cytoplasm. The protein resides in the cytoskeleton. It localises to the mitochondrion. Its function is as follows. Kinesin is a microtubule-associated force-producing protein that may play a role in organelle transport. Plays a role during spermiogenesis in the development of the sperm tail midpiece and in the normal function of spermatozoa. May play a role in the formation of the mitochondrial sheath formation in the developing spermatid midpiece. The polypeptide is Kinesin light chain 3 (KLC3) (Bos taurus (Bovine)).